Here is a 1477-residue protein sequence, read N- to C-terminus: MTITVGDAVSETELENKSQNVVLSPKASASSDISTDVDKDTSSSWDDKSLLPTGEYIVDRNKPQTYLNSDDIEKVTESDIFPQKRLFSFLHSKKIPEVPQTDDERKIYPLFHTNIISNMFFWWVLPILRVGYKRTIQPNDLFKMDPRMSIETLYDDFEKNMIYYFEKTRKKYRKRHPEATEEEVMENAKLPKHTVLRALLFTFKKQYFMSIVFAILANCTSGFNPMITKRLIEFVEEKAIFHSMHVNKGIGYAIGACLMMFVNGLTFNHFFHTSQLTGVQAKSILTKAAMKKMFNASNYARHCFPNGKVTSFVTTDLARIEFALSFQPFLAGFPAILAICIVLLIVNLGPIALVGIGIFFGGFFISLFAFKLILGFRIAANIFTDARVTMMREVLNNIKMIKYYTWEDAYEKNIQDIRTKEISKVRKMQLSRNFLIAMAMSLPSIASLVTFLAMYKVNKGGRQPGNIFASLSLFQVLSLQMFFLPIAIGTGIDMIIGLGRLQSLLEAPEDDPNQMIEMKPSPGFDPKLALKMTHCSFEWEDYELNDAIEEAKGEAKDEGKKNKKKRKDTWGKPSASTNKAKRLDNMLKDRDGPEDLEKTSFRGFKDLNFDIKKGEFIMITGPIGTGKSSLLNAMAGSMRKTDGKVEVNGDLLMCGYPWIQNASVRDNIIFGSPFNKEKYDEVVRVCSLKADLDILPAGDMTEIGERGITLSGGQKARINLARSVYKKKDIYLFDDVLSAVDSRVGKHIMDECLTGMLANKTRILATHQLSLIERASRVIVLGTDGQVDIGTVDELKARNQTLINLLQFSSQNSEKEDEEQEAVVAGELGQLKYESEVKELTELKKKATEMSQTANSGKIVADGHTSSKEERAVNSISLKIYREYIKAAVGKWGFIALPLYAILVVGTTFCSLFSSVWLSYWTENKFKNRPPSFYMGLYSFFVFAAFIFMNGQFTILCAMGIMASKWLNLRAVKRILHTPMSYIDTTPLGRILNRFTKDTDSLDNELTESLRLMTSQFANIVGVCVMCIVYLPWFAIAIPFLLVIFVLIADHYQSSGREIKRLEAVQRSFVYNNLNEVLGGMDTIKAYRSQERFLAKSDFLINKMNEAGYLVVVLQRWVGIFLDMVAIAFALIITLLCVTRAFPISAASVGVLLTYVLQLPGLLNTILRAMTQTENDMNSAERLVTYATELPLEASYRKPEMTPPESWPSMGEIIFENVDFAYRPGLPIVLKNLNLNIKSGEKIGICGRTGAGKSTIMSALYRLNELTAGKILIDNVDISQLGLFDLRRKLAIIPQDPVLFRGTIRKNLDPFNERTDDELWDALVRGGAIAKDDLPEVKLQKPDENGTHGKMHKFHLDQAVEEEGSNFSLGERQLLALTRALVRQSKILILDEATSSVDYETDGKIQTRIVEEFGDCTILCIAHRLKTIVNYDRILVLEKGEVAEFDTPWTLFSQEDSIFRSMCSRSGIVENDFENRS.

The tract at residues 1–48 (MTITVGDAVSETELENKSQNVVLSPKASASSDISTDVDKDTSSSWDDK) is disordered. The Cytoplasmic segment spans residues 1–206 (MTITVGDAVS…RALLFTFKKQ (206 aa)). Phosphoserine occurs at positions 10 and 24. The segment covering 36–48 (DVDKDTSSSWDDK) has biased composition (basic and acidic residues). Phosphothreonine is present on Thr-53. The Diacidic ER export motif DxE motif lies at 71-73 (DIE). A helical transmembrane segment spans residues 207-227 (YFMSIVFAILANCTSGFNPMI). The ABC transmembrane type-1 1 domain maps to 207-493 (YFMSIVFAIL…LPIAIGTGID (287 aa)). Topologically, residues 228-249 (TKRLIEFVEEKAIFHSMHVNKG) are extracellular. The chain crosses the membrane as a helical span at residues 250 to 270 (IGYAIGACLMMFVNGLTFNHF). Residues 271-328 (FHTSQLTGVQAKSILTKAAMKKMFNASNYARHCFPNGKVTSFVTTDLARIEFALSFQP) are Cytoplasmic-facing. Residues 329–349 (FLAGFPAILAICIVLLIVNLG) traverse the membrane as a helical segment. The Extracellular portion of the chain corresponds to 350 to 357 (PIALVGIG). The chain crosses the membrane as a helical span at residues 358 to 370 (IFFGGFFISLFAF). The Cytoplasmic portion of the chain corresponds to 371 to 433 (KLILGFRIAA…KVRKMQLSRN (63 aa)). Residues 434–454 (FLIAMAMSLPSIASLVTFLAM) form a helical membrane-spanning segment. At 455–478 (YKVNKGGRQPGNIFASLSLFQVLS) the chain is on the extracellular side. Residues 479–499 (LQMFFLPIAIGTGIDMIIGLG) traverse the membrane as a helical segment. The Cytoplasmic segment spans residues 500–615 (RLQSLLEAPE…DLNFDIKKGE (116 aa)). The interval 552–595 (KGEAKDEGKKNKKKRKDTWGKPSASTNKAKRLDNMLKDRDGPED) is disordered. A compositionally biased stretch (basic and acidic residues) spans 581 to 595 (KRLDNMLKDRDGPED). Residues 581–808 (KRLDNMLKDR…NQTLINLLQF (228 aa)) form the ABC transporter 1 domain. Residues 616 to 636 (FIMITGPIGTGKSSLLNAMAG) traverse the membrane as a helical segment. 621-628 (GPIGTGKS) lines the ATP pocket. Topologically, residues 637-892 (SMRKTDGKVE…EYIKAAVGKW (256 aa)) are extracellular. N-linked (GlcNAc...) asparagine glycans are attached at residues Asn-661, Asn-759, and Asn-799. The chain crosses the membrane as a helical span at residues 893–913 (GFIALPLYAILVVGTTFCSLF). The 279-residue stretch at 897-1175 (LPLYAILVVG…ILRAMTQTEN (279 aa)) folds into the ABC transmembrane type-1 2 domain. At 914-940 (SSVWLSYWTENKFKNRPPSFYMGLYSF) the chain is on the cytoplasmic side. The helical transmembrane segment at 941-961 (FVFAAFIFMNGQFTILCAMGI) threads the bilayer. Residues 962-1027 (MASKWLNLRA…ANIVGVCVMC (66 aa)) are Extracellular-facing. The chain crosses the membrane as a helical span at residues 1028 to 1048 (IVYLPWFAIAIPFLLVIFVLI). Residues 1049-1117 (ADHYQSSGRE…GYLVVVLQRW (69 aa)) are Cytoplasmic-facing. A helical transmembrane segment spans residues 1118 to 1138 (VGIFLDMVAIAFALIITLLCV). The Extracellular segment spans residues 1139–1141 (TRA). Residues 1142 to 1162 (FPISAASVGVLLTYVLQLPGL) traverse the membrane as a helical segment. At 1163–1477 (LNTILRAMTQ…IVENDFENRS (315 aa)) the chain is on the cytoplasmic side. The region spanning 1213 to 1464 (IIFENVDFAY…EDSIFRSMCS (252 aa)) is the ABC transporter 2 domain. 1247-1254 (GRTGAGKS) lines the ATP pocket.

It belongs to the ABC transporter superfamily. ABCC family. Conjugate transporter (TC 3.A.1.208) subfamily.

The protein localises to the cell membrane. The enzyme catalyses a 1,2-diacyl-sn-glycero-3-phosphoethanolamine(in) + ATP + H2O = a 1,2-diacyl-sn-glycero-3-phosphoethanolamine(out) + ADP + phosphate + H(+). The catalysed reaction is Cd(2+)(in) + ATP + H2O = Cd(2+)(out) + ADP + phosphate + H(+). It carries out the reaction an S-substituted glutathione(in) + ATP + H2O = an S-substituted glutathione(out) + ADP + phosphate + H(+). In terms of biological role, functions as a pleiotropic drug pump at the plasma membrane to clear toxic substances from the cytosol. Organic anion transporter involved in the detoxification of a wide range of toxic environmental organic anions that contain carboxyl groups. Required for tolerance to reveromycin A, tautomycin and leptomycin B. Required for oligomycin resistance. Required for rhodamine B resistance. Mediates the ATP-dependent efflux of rhodamine B. Involved in cadmium detoxification. Displays an energy-dependent efflux of cadmium and glutathione, suggesting that YOR1 transports both compounds as a bis-glutathionato-cadmium Cd-(GS)(2) complex. Confers resistance to rhodamine 6G and to doxorubicin. The chain is Oligomycin resistance ATP-dependent permease YOR1 from Saccharomyces cerevisiae (strain ATCC 204508 / S288c) (Baker's yeast).